The sequence spans 305 residues: tRNA pseudouridine synthase B (305 aa).

The active-site Nucleophile is the aspartate 39.

The protein belongs to the pseudouridine synthase TruB family. Type 1 subfamily.

The enzyme catalyses uridine(55) in tRNA = pseudouridine(55) in tRNA. Responsible for synthesis of pseudouridine from uracil-55 in the psi GC loop of transfer RNAs. The sequence is that of tRNA pseudouridine synthase B from Staphylococcus aureus (strain bovine RF122 / ET3-1).